Consider the following 400-residue polypeptide: Elongation factor Tu (400 aa).

The 199-residue stretch at 10–208 (KPHVNVGTIG…AMDNYIPDPQ (199 aa)) folds into the tr-type G domain. Positions 19–26 (GHIDHGKS) are G1. 19-26 (GHIDHGKS) serves as a coordination point for GTP. Serine 26 is a Mg(2+) binding site. The G2 stretch occupies residues 60–64 (GITIN). The G3 stretch occupies residues 81-84 (DCPG). Residues 81–85 (DCPGH) and 136–139 (NKTD) contribute to the GTP site. Residues 136–139 (NKTD) are G4. The segment at 174–176 (SAL) is G5.

The protein belongs to the TRAFAC class translation factor GTPase superfamily. Classic translation factor GTPase family. EF-Tu/EF-1A subfamily. As to quaternary structure, monomer.

The protein localises to the cytoplasm. It carries out the reaction GTP + H2O = GDP + phosphate + H(+). In terms of biological role, GTP hydrolase that promotes the GTP-dependent binding of aminoacyl-tRNA to the A-site of ribosomes during protein biosynthesis. In Thermotoga neapolitana (strain ATCC 49049 / DSM 4359 / NBRC 107923 / NS-E), this protein is Elongation factor Tu.